The sequence spans 362 residues: Ribosome-binding ATPase YchF (362 aa).

In terms of domain architecture, OBG-type G spans phenylalanine 3–methionine 255. Asparagine 12 to threonine 17 serves as a coordination point for ATP. Positions 16 and 36 each coordinate Mg(2+). The TGS domain occupies asparagine 277–phenylalanine 360.

This sequence belongs to the TRAFAC class OBG-HflX-like GTPase superfamily. OBG GTPase family. YchF/OLA1 subfamily. Mg(2+) serves as cofactor.

Its function is as follows. ATPase that binds to both the 70S ribosome and the 50S ribosomal subunit in a nucleotide-independent manner. The polypeptide is Ribosome-binding ATPase YchF (Buchnera aphidicola subsp. Acyrthosiphon pisum (strain APS) (Acyrthosiphon pisum symbiotic bacterium)).